Consider the following 141-residue polypeptide: Stage V sporulation protein AB (141 aa).

Transmembrane regions (helical) follow at residues Phe-7–Leu-27, Phe-45–Leu-65, Trp-75–Leu-95, and Ile-115–Leu-135.

It is found in the cell membrane. The polypeptide is Stage V sporulation protein AB (spoVAB) (Bacillus subtilis (strain 168)).